A 283-amino-acid polypeptide reads, in one-letter code: Pantothenate synthetase 1 (283 aa).

30 to 37 (MGYLHDGH) lines the ATP pocket. His-37 acts as the Proton donor in catalysis. Gln-61 lines the (R)-pantoate pocket. Residue Gln-61 coordinates beta-alanine. Residue 147–150 (GQKD) coordinates ATP. Position 153 (Gln-153) interacts with (R)-pantoate. ATP-binding positions include Val-176 and 184 to 187 (MSSR).

Belongs to the pantothenate synthetase family. In terms of assembly, homodimer.

It is found in the cytoplasm. It catalyses the reaction (R)-pantoate + beta-alanine + ATP = (R)-pantothenate + AMP + diphosphate + H(+). The protein operates within cofactor biosynthesis; (R)-pantothenate biosynthesis; (R)-pantothenate from (R)-pantoate and beta-alanine: step 1/1. In terms of biological role, catalyzes the condensation of pantoate with beta-alanine in an ATP-dependent reaction via a pantoyl-adenylate intermediate. The protein is Pantothenate synthetase 1 of Bradyrhizobium diazoefficiens (strain JCM 10833 / BCRC 13528 / IAM 13628 / NBRC 14792 / USDA 110).